Reading from the N-terminus, the 148-residue chain is MKVIFTQDVKGKGKKGEIKEVPVGYANNFLLKNKLAVEATPGNLKQLEAQKKRVEADKQQELEDAQALKEKLEALEVNVTAKSGEGGRLFGSVSSKQVADALNKQHGIKIDKRKMDLHDGIRSLGYTNVPVKLHNKVIGTLKVHVTEA.

The protein belongs to the bacterial ribosomal protein bL9 family.

Binds to the 23S rRNA. This Macrococcus caseolyticus (strain JCSC5402) (Macrococcoides caseolyticum) protein is Large ribosomal subunit protein bL9.